The following is a 258-amino-acid chain: Small ribosomal subunit protein uS15m (258 aa).

Residues 1 to 57 (MLRAAWRALSSVRAQAVTRAPVPALRGGSSASLLSARCGLQPPSLLRAARAYAAVQK) constitute a mitochondrion transit peptide. The tract at residues 229-258 (KAAAAAAKKEKNEGVPENPSNAVPEKTQVN) is disordered.

The protein belongs to the universal ribosomal protein uS15 family. Component of the mitochondrial ribosome small subunit (28S) which comprises a 12S rRNA and about 30 distinct proteins. Interacts with METTL17.

It is found in the mitochondrion matrix. The protein is Small ribosomal subunit protein uS15m (Mrps15) of Mus musculus (Mouse).